Here is a 504-residue protein sequence, read N- to C-terminus: Maturase K (504 aa).

This sequence belongs to the intron maturase 2 family. MatK subfamily.

Its subcellular location is the plastid. It localises to the chloroplast. Functionally, usually encoded in the trnK tRNA gene intron. Probably assists in splicing its own and other chloroplast group II introns. The chain is Maturase K from Lepidium virginicum (Virginia pepperweed).